Reading from the N-terminus, the 136-residue chain is Nucleoside diphosphate kinase (136 aa).

Positions 10, 58, 86, 92, 104, and 114 each coordinate ATP. Residue histidine 117 is the Pros-phosphohistidine intermediate of the active site.

Belongs to the NDK family. In terms of assembly, homotetramer. Requires Mg(2+) as cofactor.

The protein localises to the cytoplasm. The catalysed reaction is a 2'-deoxyribonucleoside 5'-diphosphate + ATP = a 2'-deoxyribonucleoside 5'-triphosphate + ADP. It catalyses the reaction a ribonucleoside 5'-diphosphate + ATP = a ribonucleoside 5'-triphosphate + ADP. In terms of biological role, major role in the synthesis of nucleoside triphosphates other than ATP. The ATP gamma phosphate is transferred to the NDP beta phosphate via a ping-pong mechanism, using a phosphorylated active-site intermediate. The sequence is that of Nucleoside diphosphate kinase from Mycobacterium avium (strain 104).